A 203-amino-acid chain; its full sequence is Holliday junction branch migration complex subunit RuvA (203 aa).

The interval 1–64 (MIGRLRGIIL…EDAQLLYGFN (64 aa)) is domain I. A domain II region spans residues 65–142 (NKQERTLFKE…KGLHGDLFTP (78 aa)). Residues 143 to 154 (AADLVLTSPASP) are flexible linker. Residues 155-203 (ATDDAEQEAVAALVALGYKPQEASRMVSKIARPDASSETLIREALRAAL) form a domain III region.

Belongs to the RuvA family. Homotetramer. Forms an RuvA(8)-RuvB(12)-Holliday junction (HJ) complex. HJ DNA is sandwiched between 2 RuvA tetramers; dsDNA enters through RuvA and exits via RuvB. An RuvB hexamer assembles on each DNA strand where it exits the tetramer. Each RuvB hexamer is contacted by two RuvA subunits (via domain III) on 2 adjacent RuvB subunits; this complex drives branch migration. In the full resolvosome a probable DNA-RuvA(4)-RuvB(12)-RuvC(2) complex forms which resolves the HJ.

The protein resides in the cytoplasm. The RuvA-RuvB-RuvC complex processes Holliday junction (HJ) DNA during genetic recombination and DNA repair, while the RuvA-RuvB complex plays an important role in the rescue of blocked DNA replication forks via replication fork reversal (RFR). RuvA specifically binds to HJ cruciform DNA, conferring on it an open structure. The RuvB hexamer acts as an ATP-dependent pump, pulling dsDNA into and through the RuvAB complex. HJ branch migration allows RuvC to scan DNA until it finds its consensus sequence, where it cleaves and resolves the cruciform DNA. This is Holliday junction branch migration complex subunit RuvA from Citrobacter koseri (strain ATCC BAA-895 / CDC 4225-83 / SGSC4696).